We begin with the raw amino-acid sequence, 877 residues long: Probable alpha/beta-glucosidase agdC (877 aa).

A signal peptide spans 1–14; it reads MLGSLLLLAPLAGA. Residues N171, N293, and N373 are each glycosylated (N-linked (GlcNAc...) asparagine). Residue D422 is the Nucleophile of the active site. E425 is a catalytic residue. Positions 432-476 are disordered; it reads DPCTDPERYSSENNLPPAPPPVRSSSPRPLPGFPADFQPSSASRS. The segment covering 447 to 463 has biased composition (pro residues); it reads PPAPPPVRSSSPRPLPG. Residue N508 is glycosylated (N-linked (GlcNAc...) asparagine). The active-site Proton donor is the D573. N574, N610, and N744 each carry an N-linked (GlcNAc...) asparagine glycan.

Belongs to the glycosyl hydrolase 31 family.

The protein resides in the secreted. The enzyme catalyses Hydrolysis of terminal, non-reducing (1-&gt;4)-linked alpha-D-glucose residues with release of alpha-D-glucose.. It catalyses the reaction Hydrolysis of terminal, non-reducing beta-D-glucosyl residues with release of beta-D-glucose.. In terms of biological role, glucosidase involved in the degradation of cellulosic biomass. Has both alpha- and beta-glucosidase activity. The protein is Probable alpha/beta-glucosidase agdC (agdC) of Aspergillus oryzae (strain ATCC 42149 / RIB 40) (Yellow koji mold).